The following is a 933-amino-acid chain: Clumping factor A (933 aa).

An N-terminal signal peptide occupies residues methionine 1–alanine 39. A YSIRK-G/S signaling motif motif is present at residues histidine 9–serine 20. Disordered regions lie at residues serine 34–aspartate 200 and phenylalanine 529–glutamate 904. The ligand binding A region stretch occupies residues serine 40–proline 542. Positions serine 47 to alanine 65 are enriched in low complexity. The span at threonine 71–asparagine 105 shows a compositional bias: polar residues. Residues alanine 106 to glutamine 132 show a composition bias toward low complexity. Positions serine 133 to aspartate 200 are enriched in polar residues. The span at glutamine 547–proline 565 shows a compositional bias: acidic residues. Over residues glycine 566–aspartate 598 the composition is skewed to low complexity. Acidic residues predominate over residues serine 599 to serine 861. Positions aspartate 862–glycine 880 are enriched in low complexity. Positions asparagine 887–leucine 896 are enriched in basic and acidic residues. The short motif at leucine 896–glycine 900 is the LPXTG sorting signal element. Threonine 899 is modified (pentaglycyl murein peptidoglycan amidated threonine). Positions glycine 900–lysine 933 are cleaved as a propeptide — removed by sortase.

Belongs to the serine-aspartate repeat-containing protein (SDr) family.

It localises to the secreted. It is found in the cell wall. Cell surface-associated protein implicated in virulence. Promotes bacterial attachment exclusively to the gamma-chain of human fibrinogen. Induces formation of bacterial clumps, which diminish the ability of group IIA phospholipase A2 to cause bacterial phospholipid hydrolysis and killing. Significantly decreases macrophage phagocytosis possibly thanks to the clumps, clumped bacteria being too large to be phagocytosed. Dominant factor responsible for human platelet aggregation, which may be an important mechanism for initiating infective endocarditis. Enhances spleen cell proliferative response in vitro, contributing significantly to the immunostimulatory activity of S.aureus. In Staphylococcus aureus (strain Newman), this protein is Clumping factor A (clfA).